A 475-amino-acid chain; its full sequence is WASH complex subunit 1 (475 aa).

Residues M1–R54 are required for WASH complex assembly. Residues M1–I167 are WHD1. A Glycyl lysine isopeptide (Lys-Gly) (interchain with G-Cter in ubiquitin) cross-link involves residue K219. Positions E296–S475 are disordered. Residues A302 to P318 show a composition bias toward pro residues. Positions Q357–S475 are VCA. The 23-residue stretch at G369–V391 folds into the WH2 domain. Over residues S390–Q406 the composition is skewed to basic and acidic residues. Gly residues predominate over residues S432–G446. Positions G466–S475 are enriched in acidic residues.

The protein belongs to the WASH1 family. As to quaternary structure, component of the WASH core complex also described as WASH regulatory complex SHRC composed of WASHC1, WASHC2, WASHC3, WASHC4 and WASHC5. The WASH core complex associates with the F-actin-capping protein dimer (formed by CAPZA1, CAPZA2 or CAPZA3 and CAPZB) in a transient or substoichiometric manner which was initially described as WASH complex. Interacts (via WHD1 region) with WASHC2; the interaction is direct. Interacts with BECN1; WASHC1 and AMBRA1 can competitively interact with BECN1. Interacts with BLOC1S2; may associate with the BLOC-1 complex. Interacts with tubulin gamma chain (TUBG1 or TUBG2). Interacts with TBC1D23. Ubiquitinated at Lys-219 via 'Lys-63'-linked ubiquitin chains by the TRIM27:MAGEL2 E3 ubiquitin ligase complex, leading to promote endosomal F-actin assembly.

The protein localises to the early endosome membrane. It localises to the recycling endosome membrane. Acts as a component of the WASH core complex that functions as a nucleation-promoting factor (NPF) at the surface of endosomes, where it recruits and activates the Arp2/3 complex to induce actin polymerization, playing a key role in the fission of tubules that serve as transport intermediates during endosome sorting. Regulates the trafficking of endosomal alpha5beta1 integrin to the plasma membrane and involved in invasive cell migration. In T-cells involved in endosome-to-membrane recycling of receptors including T-cell receptor (TCR), CD28 and ITGAL; proposed to be implicated in T-cell proliferation and effector function. In dendritic cells involved in endosome-to-membrane recycling of major histocompatibility complex (MHC) class II probably involving retromer and subsequently allowing antigen sampling, loading and presentation during T-cell activation. Involved in cytokinesis and following polar body extrusion during oocyte meiotic maturation. Involved in Arp2/3 complex-dependent actin assembly driving Salmonella typhimurium invasion independent of ruffling. Involved in the exocytosis of MMP14 leading to matrix remodeling during invasive migration and implicating late endosome-to-plasma membrane tubular connections and cooperation with the exocyst complex. Involved in negative regulation of autophagy independently from its role in endosomal sorting by inhibiting BECN1 ubiquitination to inactivate PIK3C3/Vps34 activity. In Rattus norvegicus (Rat), this protein is WASH complex subunit 1.